The following is a 239-amino-acid chain: Riboflavin synthase (239 aa).

Lumazine-binding repeat units follow at residues 1 to 105 (MFTG…MGGH) and 106 to 205 (VVQG…EKQI). Residues 4 to 6 (GLV), 54 to 56 (CLT), 70 to 75 (GISPET), 109 to 111 (GHV), K145, 154 to 156 (SLT), and 170 to 175 (SMVSYT) contribute to the 2,4-dihydroxypteridine site.

In terms of assembly, homotrimer.

The enzyme catalyses 2 6,7-dimethyl-8-(1-D-ribityl)lumazine + H(+) = 5-amino-6-(D-ribitylamino)uracil + riboflavin. Its pathway is cofactor biosynthesis; riboflavin biosynthesis; riboflavin from 2-hydroxy-3-oxobutyl phosphate and 5-amino-6-(D-ribitylamino)uracil: step 2/2. Catalyzes the dismutation of two molecules of 6,7-dimethyl-8-ribityllumazine, resulting in the formation of riboflavin and 5-amino-6-(D-ribitylamino)uracil. This chain is Riboflavin synthase (RIB5), found in Meyerozyma guilliermondii (strain ATCC 6260 / CBS 566 / DSM 6381 / JCM 1539 / NBRC 10279 / NRRL Y-324) (Yeast).